We begin with the raw amino-acid sequence, 122 residues long: Protein GL2-INTERACTING REPRESSOR 1 (122 aa).

Residues Met-1–Leu-10 show a composition bias toward basic and acidic residues. A disordered region spans residues Met-1–Glu-62. Residues Lys-7–Leu-12 carry the EAR motif. Residues Ser-27–Ser-46 show a composition bias toward low complexity. Residues Glu-47–Glu-62 are compositionally biased toward polar residues.

In terms of assembly, interacts with GL2. Interacts with TPL. As to expression, expressed in root and shoot meristems.

The protein localises to the nucleus. Functionally, acts as a negative regulator of root hair development redundantly with GIR2. GIR1 and GIR2 may function as adapter proteins that associate with GL2 and participate in the control of root hair formation. GIR1 and GIR2 may function as adapter proteins that associate with TPL and participate in the repression of root gene expression. The sequence is that of Protein GL2-INTERACTING REPRESSOR 1 from Arabidopsis thaliana (Mouse-ear cress).